The sequence spans 518 residues: Envelope protein (518 aa).

Positions 1–31 (MSVNRSSIKSLLMVFMIVSSSLLAPVGGAAA) are cleaved as a signal peptide. Residues 32-485 (DEFRTPAASD…IEDREPEAGG (454 aa)) lie on the Extracellular side of the membrane. N213 carries an N-linked (GlcNAc...) (hybrid) asparagine; by host glycan. The chain crosses the membrane as a helical span at residues 486 to 506 (FFGSGSTDTMLVGLLALAGVL). Topologically, residues 507-518 (LLAQSNNRGGRR) are cytoplasmic.

N-glycosylated by a pentasaccharide comprising glucose, glucuronic acid and a terminal 5-N-formyl-legionaminic acid residue.

The protein resides in the virion membrane. Functionally, envelope protein that may play a role in host-cell attachment and viral genome entry. This chain is Envelope protein, found in Halorubrum sp. PV6 (HRPV-1).